The chain runs to 1010 residues: Glycine--tRNA ligase (1010 aa).

The interval 1–312 (MSEHPLTLQS…TSESVVPMIS (312 aa)) is glycine--tRNA ligase alpha subunit. Residues 313-1010 (STEDLLLEIG…SLCHWESVAV (698 aa)) are glycine--tRNA ligase beta subunit.

The protein belongs to the class-II aminoacyl-tRNA synthetase family.

The protein resides in the cytoplasm. It carries out the reaction tRNA(Gly) + glycine + ATP = glycyl-tRNA(Gly) + AMP + diphosphate. In Chlamydia pneumoniae (Chlamydophila pneumoniae), this protein is Glycine--tRNA ligase (glyQS).